Reading from the N-terminus, the 1852-residue chain is Dihydropyridine-sensitive L-type skeletal muscle calcium channel subunit alpha-1 (1852 aa).

The Cytoplasmic segment spans residues 1–70 (MESGSGGGGG…KTCINIVEWK (70 aa)). An I repeat occupies 57–354 (NPFRKTCINI…LVLGALSGEF (298 aa)). A helical transmembrane segment spans residues 71–86 (PFEIIILLTIFANCVA). Over 87–107 (LAVFLPMPEEDTNNTNLTLES) the chain is Extracellular. Residues Asn99 and Asn102 are each glycosylated (N-linked (GlcNAc...) asparagine). A helical transmembrane segment spans residues 108-127 (LEYIFLVIFTLECFLKIVAY). Over 128 to 139 (GLLFHEGAYLRN) the chain is Cytoplasmic. A helical membrane pass occupies residues 140 to 155 (CWNILDFVIVFMGLFT). Residues 156–176 (LVVDTINTIAGVPTEKGGGFD) are Extracellular-facing. The helical transmembrane segment at 177–195 (MKALRAFRVLRPLRLVSGV) threads the bilayer. Over 196–214 (PSLQVVMSSILKSMLPLFH) the chain is Cytoplasmic. The helical transmembrane segment at 215–234 (IALLVFFMVHIYAIMGLELF) threads the bilayer. Residues 235-326 (KCKMHKTCYY…WINDAMGNDW (92 aa)) are Extracellular-facing. N-linked (GlcNAc...) asparagine glycosylation is present at Asn274. A helical membrane pass occupies residues 327 to 351 (PWIYFLTLILVGSFFILNLVLGALS). Residues 352–447 (GEFTKEREES…RKCHVWVKSK (96 aa)) are Cytoplasmic-facing. Residues 374 to 391 (QQMDEDLEGYMEWITHAE) form a binding to the beta subunit region. The stretch at 433 to 679 (NVVLRRKCHV…VFLAIAVDNL (247 aa)) is one II repeat. A helical membrane pass occupies residues 448 to 466 (FFNWWVLLVVLLNTLVIAM). The Extracellular portion of the chain corresponds to 467-481 (EHHNQTEGLTSFQDT). N-linked (GlcNAc...) asparagine glycosylation is present at Asn470. A helical transmembrane segment spans residues 482–501 (ANVILLACFTIEMVMKMYAF). The Cytoplasmic segment spans residues 502–509 (GPRAYFMS). The helical transmembrane segment at 510 to 528 (IFNRFDCFVVTIGILEIIL) threads the bilayer. The Extracellular segment spans residues 529–538 (VVSNIMTPLG). A helical transmembrane segment spans residues 539–557 (ISVMRCIRLLRLFKLTRYW). At 558 to 576 (TSLNNLVASLLNSVKSIAS) the chain is on the cytoplasmic side. Residues 577 to 596 (LLLLLFLFIVIFALLGMQVF) form a helical membrane-spanning segment. Residues 597–651 (GGKFNFPDRVIQRSNFDNFPQALISVFQVLTGEEWDSIMYNGIMAHGGPQSPGIL) are Extracellular-facing. The chain crosses the membrane as a helical span at residues 652–675 (VSIYFIILYVCGNFVLLNVFLAIA). Over 676–815 (VDNLAEAESL…KLCHRIVNHT (140 aa)) the chain is Cytoplasmic. The III repeat unit spans residues 802–1084 (HKFRKLCHRI…IFVGFVIVTF (283 aa)). The chain crosses the membrane as a helical span at residues 816-834 (TFTNIILLFILLSSISLAA). Residues 835–850 (EDPIDPRSFRNKVLAY) lie on the Extracellular side of the membrane. Residues 851–870 (ADIVFTTVFTIEIVLKMTVY) traverse the membrane as a helical segment. The Cytoplasmic segment spans residues 871-882 (GAFLHTGSFCRN). A helical membrane pass occupies residues 883–901 (SFNILDLIVVGVSLLSMGM). Residues 902 to 908 (ESSTISV) lie on the Extracellular side of the membrane. Residues 909–927 (VKILRVLRVLRPLRAINRA) form a helical membrane-spanning segment. The Cytoplasmic segment spans residues 928-946 (KGLKHVVQCMFVAIKTIGN). Residues 947–966 (IVLVTMLLDFMFACIGVQLF) form a helical membrane-spanning segment. At 967–1056 (KGKLYYCTDP…TGPLYNNRVG (90 aa)) the chain is on the extracellular side. Residues 1004 to 1093 (RMWVNSDFNF…FQKQGEQEYK (90 aa)) are dihydropyridine binding. A helical transmembrane segment spans residues 1057 to 1081 (ISIFFIIYIIIIAFFMMNIFVGFVI). Topologically, residues 1082–1134 (VTFQKQGEQEYKDCELDKNQRQCVQYALKARPLKCYIPKNPHQYRVWYFVTSC) are cytoplasmic. One copy of the IV repeat lies at 1121–1405 (NPHQYRVWYF…LFVAIIMDNV (285 aa)). Residues 1135–1153 (YFEYLMFFLIMLNTLCLGI) traverse the membrane as a helical segment. Topologically, residues 1154-1168 (QHCNQSDHITKLSDT) are extracellular. Asn1157 is a glycosylation site (N-linked (GlcNAc...) asparagine). The chain crosses the membrane as a helical span at residues 1169–1188 (LNLIFTVLFTGEMIVKLIAF). The Cytoplasmic segment spans residues 1189-1196 (KAKGYFGD). Residues 1197 to 1215 (PWNVFDFIIVVGSIVDVVL) form a helical membrane-spanning segment. The Extracellular portion of the chain corresponds to 1216-1252 (SEVDAALEARGGLWCLHGCAEVNPMQAIAEAENVRVS). A helical membrane pass occupies residues 1253–1271 (ITFFRLFRVLRLIKLLNRS). At 1272-1290 (EGIRNLLWTFIKSFQALPH) the chain is on the cytoplasmic side. A helical membrane pass occupies residues 1291–1310 (VGLLIVMLFFIYAVIGMQMF). The Extracellular portion of the chain corresponds to 1311–1377 (GKVALVDGTE…GEEYTCGSSI (67 aa)). The tract at residues 1358–1424 (LCDAKSDYGP…LGPHHLDEFK (67 aa)) is dihydropyridine binding. Residues 1370-1413 (EYTCGSSIAVFYFLSFYILCAFLIINLFVAIIMDNVDYLTRDWS) form a phenylalkylamine binding region. The chain crosses the membrane as a helical span at residues 1378 to 1402 (AVFYFLSFYILCAFLIINLFVAIIM). Over 1403-1852 (DNVDYLTRDW…TKPKENTSAV (450 aa)) the chain is Cytoplasmic. The EF-hand domain occupies 1418–1453 (HHLDEFKKIWAEYDPEATGRIKHLDVVTLLRRIQPP). Ca(2+) contacts are provided by Asp1431, Glu1433, Thr1435, Arg1437, and Asp1442. The interval 1820 to 1852 (NRQSGKVTKRKRRPIPVPPGTKSTKPKENTSAV) is disordered.

It belongs to the calcium channel alpha-1 subunit (TC 1.A.1.11) family. As to quaternary structure, multisubunit complex consisting of alpha-1, alpha-2, beta and delta subunits in a 1:1:1:1 ratio. The channel activity is directed by the pore-forming and voltage-sensitive alpha-1 subunit. In many cases, this subunit is sufficient to generate voltage-sensitive calcium channel activity. The auxiliary subunits beta and alpha-2/delta linked by a disulfide bridge regulate the channel activity. An additional gamma subunit is present only in skeletal muscle L-type channel. In terms of processing, may be non-phosphorylated. In terms of tissue distribution, skeletal muscle.

It localises to the membrane. Functionally, voltage-sensitive calcium channels (VSCC) mediate the entry of calcium ions into excitable cells and are also involved in a variety of calcium-dependent processes, including muscle contraction, gene expression, cell motility, cell division and cell death. The isoform alpha-1S gives rise to L-type calcium currents. Long-lasting (L-type) calcium channels belong to the 'high-voltage activated' (HVA) group. They are blocked by dihydropyridines (DHP), phenylalkylamines, and by benzothiazepines. Calcium channels containing the alpha-1S subunit play an important role in excitation-contraction coupling in skeletal muscle. The protein is Dihydropyridine-sensitive L-type skeletal muscle calcium channel subunit alpha-1 of Cyprinus carpio (Common carp).